We begin with the raw amino-acid sequence, 608 residues long: Kelch-like protein 10 (608 aa).

Positions 39–106 (CDVVIKVNGF…AYTRTVPITP (68 aa)) constitute a BTB domain. Kelch repeat units lie at residues 292–339 (ILFA…YLKG), 340–386 (YVYI…VLSN), 388–433 (IYAM…TLYG), 434–480 (KVYI…AYGE), 481–527 (HVYA…VVDD), and 529–574 (LFVV…VVPG). Serine 501 is subject to Phosphoserine.

As to quaternary structure, self-associates. Interacts with CUL3; indicative for the participation in an E3 ubiquitin ligase complex. As to expression, testis specific.

It is found in the cytoplasm. Its pathway is protein modification; protein ubiquitination. Functionally, may be a substrate-specific adapter of a CUL3-based E3 ubiquitin-protein ligase complex which mediates the ubiquitination and subsequent proteasomal degradation of target proteins during spermatogenesis. Required for male fertility. The polypeptide is Kelch-like protein 10 (Klhl10) (Mus musculus (Mouse)).